The following is a 444-amino-acid chain: Putative methylesterase 13, chloroplastic (444 aa).

Disordered regions lie at residues 1 to 32, 49 to 90, and 124 to 176; these read MGNSFTCISHEQEQRPKKSSGGGGNNSGKYKY, PSLS…KDSH, and SVVY…QLVD. The transit peptide at 1-60 directs the protein to the chloroplast; it reads MGNSFTCISHEQEQRPKKSSGGGGNNSGKYKYVRRLSLMPSFRRRTLLPSLSCSGSSSTS. The segment covering 49 to 64 has biased composition (low complexity); the sequence is PSLSCSGSSSTSSSKK. The segment covering 65–82 has biased composition (basic residues); the sequence is GGIKAKTKKIRERHHHHH. Polar residues predominate over residues 124-148; sequence SVVYPSAQPSGTSSGPVSAVQTPKK. Positions 149–164 are enriched in low complexity; sequence SSAGFVRSSSSRQRSS. One can recognise an AB hydrolase-1 domain in the interval 190–310; sequence FVLVHGGGFG…LFNQQLGSND (121 aa). Residue aspartate 264 is the Acyl-ester intermediate of the active site. Active-site charge relay system residues include aspartate 390 and histidine 418.

This sequence belongs to the AB hydrolase superfamily. Methylesterase family.

It localises to the plastid. The protein localises to the chloroplast. Putative methylesterase. This chain is Putative methylesterase 13, chloroplastic, found in Arabidopsis thaliana (Mouse-ear cress).